Reading from the N-terminus, the 212-residue chain is ATP-dependent Clp protease proteolytic subunit (212 aa).

Serine 109 (nucleophile) is an active-site residue. Histidine 134 is a catalytic residue.

Belongs to the peptidase S14 family. As to quaternary structure, fourteen ClpP subunits assemble into 2 heptameric rings which stack back to back to give a disk-like structure with a central cavity, resembling the structure of eukaryotic proteasomes.

It localises to the cytoplasm. It catalyses the reaction Hydrolysis of proteins to small peptides in the presence of ATP and magnesium. alpha-casein is the usual test substrate. In the absence of ATP, only oligopeptides shorter than five residues are hydrolyzed (such as succinyl-Leu-Tyr-|-NHMec, and Leu-Tyr-Leu-|-Tyr-Trp, in which cleavage of the -Tyr-|-Leu- and -Tyr-|-Trp bonds also occurs).. Functionally, cleaves peptides in various proteins in a process that requires ATP hydrolysis. Has a chymotrypsin-like activity. Plays a major role in the degradation of misfolded proteins. In Bdellovibrio bacteriovorus (strain ATCC 15356 / DSM 50701 / NCIMB 9529 / HD100), this protein is ATP-dependent Clp protease proteolytic subunit.